The sequence spans 206 residues: Thymidylate kinase (206 aa).

Position 11 to 18 (11 to 18 (GIDGAGKT)) interacts with ATP.

The protein belongs to the thymidylate kinase family.

The catalysed reaction is dTMP + ATP = dTDP + ADP. In terms of biological role, phosphorylation of dTMP to form dTDP in both de novo and salvage pathways of dTTP synthesis. In Burkholderia thailandensis (strain ATCC 700388 / DSM 13276 / CCUG 48851 / CIP 106301 / E264), this protein is Thymidylate kinase.